The following is a 318-amino-acid chain: DNA repair nuclease/redox regulator APEX1 (318 aa).

The tract at residues 1–59 (MPKRGKKGAVVEDAEEPKTEPEAKKSKAGAKKNEKEAVGEGAVLYEDPPDQKTSPSGKS) is disordered. The interval 2–33 (PKRGKKGAVVEDAEEPKTEPEAKKSKAGAKKN) is necessary for interaction with YBX1, binding to RNA, association together with NPM1 to rRNA, endoribonuclease activity on abasic RNA and localization in the nucleoli. Lys-6 and Lys-7 each carry N6-acetyllysine; by EP300. A Nuclear localization signal (NLS) motif is present at residues 8 to 13 (GAVVED). Residues 16-38 (EPKTEPEAKKSKAGAKKNEKEAV) are compositionally biased toward basic and acidic residues. The tract at residues 23-33 (AKKSKAGAKKN) is necessary for interaction with NPM1 and for efficient rRNA binding. An N6-acetyllysine mark is found at Lys-27, Lys-31, Lys-32, and Lys-35. Ser-54 bears the Phosphoserine mark. The short motif at 64–80 (ICSWNVDGLRAWIKKKG) is the Nuclear export signal (NES) element. Cys-65 bears the S-nitrosocysteine; alternate mark. Cys-65 and Cys-93 form a disulfide bridge. A Mg(2+)-binding site is contributed by Asp-70. The residue at position 93 (Cys-93) is an S-nitrosocysteine; alternate. Residue Glu-96 participates in Mg(2+) binding. The active site involves Tyr-171. The residue at position 197 (Lys-197) is an N6-acetyllysine. The Mg(2+) site is built by Asp-210 and Asn-212. Asp-210 functions as the Proton donor/acceptor in the catalytic mechanism. Thr-233 carries the phosphothreonine; by CDK5 modification. Residues 289 to 318 (QSVLPALCDSKIRSKALGSDHCPITLYLAL) are mitochondrial targeting sequence (MTS). Asp-308 contacts Mg(2+). At Cys-310 the chain carries S-nitrosocysteine.

This sequence belongs to the DNA repair enzymes AP/ExoA family. In terms of assembly, monomer. Homodimer; disulfide-linked. Component of the SET complex, composed of at least APEX1, SET, ANP32A, HMGB2, NME1 and TREX1. Associates with the dimer XRCC5/XRCC6 in a DNA-dependent manner. Interacts with SIRT1; the interaction is increased in the context of genotoxic stress. Interacts with HDAC1, HDAC2 and HDAC3; the interactions are not dependent on the APEX1 acetylation status. Interacts with XRCC1; the interaction is induced by SIRT1 and increased with the APEX1 acetylated form. Interacts with NPM1 (via N-terminal domain); the interaction is RNA-dependent and decreases in hydrogen peroxide-damaged cells. Interacts (via N-terminus) with YBX1 (via C-terminus); the interaction is increased in presence of APEX1 acetylated at Lys-6 and Lys-7. Interacts with HNRNPL; the interaction is DNA-dependent. Interacts (via N-terminus) with KPNA1 and KPNA2. Interacts with TXN; the interaction stimulates the FOS/JUN AP-1 complex DNA-binding activity in a redox-dependent manner. Interacts with GZMA, KRT8, MDM2, POLB, PRDX6, PRPF19, RPLP0, TOMM20 and WDR77. Binds to CDK5. The cofactor is Mg(2+). Mn(2+) is required as a cofactor. In terms of processing, phosphorylated. Phosphorylation by kinase PKC or casein kinase CK2 results in enhanced redox activity that stimulates binding of the FOS/JUN AP-1 complex to its cognate binding site. AP-endodeoxyribonuclease activity is not affected by CK2-mediated phosphorylation. Phosphorylation of Thr-233 by CDK5 in response to MPP(+)/MPTP (1-methyl-4-phenylpyridinium) reduces AP-endodeoxyribonuclease activity resulting in accumulation of DNA damage and contributing to neuronal death. Acetylated on Lys-6 and Lys-7. Acetylation is increased by the transcriptional coactivator EP300 acetyltransferase, genotoxic agents like H(2)O(2) and methyl methanesulfonate (MMS). Acetylation increases its binding affinity to the negative calcium response element (nCaRE) DNA promoter. The acetylated form induces a stronger binding of YBX1 to the Y-box sequence in the MDR1 promoter than the unacetylated form. Deacetylated on lysines. Lys-6 and Lys-7 are deacetylated by SIRT1. Post-translationally, cleaved at Lys-31 by granzyme A to create the mitochondrial form; leading in reduction of binding to DNA, AP endodeoxyribonuclease activity, redox activation of transcription factors and to enhanced cell death. Cleaved by granzyme K; leading to intracellular ROS accumulation and enhanced cell death after oxidative stress. In terms of processing, cys-69 and Cys-93 are nitrosylated in response to nitric oxide (NO) and lead to the exposure of the nuclear export signal (NES). Ubiquitinated by MDM2; leading to translocation to the cytoplasm and proteasomal degradation. As to expression, the mitochondrial form is expressed in liver (at protein level). Thymus.

The protein resides in the nucleus. It is found in the nucleolus. It localises to the nucleus speckle. Its subcellular location is the endoplasmic reticulum. The protein localises to the cytoplasm. The protein resides in the mitochondrion. The enzyme catalyses Exonucleolytic cleavage in the 3'- to 5'-direction to yield nucleoside 5'-phosphates.. Its activity is regulated as follows. NPM1 stimulates endodeoxyribonuclease activity on double-stranded DNA with AP sites, but inhibits endoribonuclease activity on single-stranded RNA containing AP sites. Functionally, multifunctional protein that plays a central role in the cellular response to oxidative stress. The two major activities of APEX1 are DNA repair and redox regulation of transcriptional factors. Functions as an apurinic/apyrimidinic (AP) endodeoxyribonuclease in the DNA base excision repair (BER) pathway of DNA lesions induced by oxidative and alkylating agents. Initiates repair of AP sites in DNA by catalyzing hydrolytic incision of the phosphodiester backbone immediately adjacent to the damage, generating a single-strand break with 5'-deoxyribose phosphate and 3'-hydroxyl ends. Also incises at AP sites in the DNA strand of DNA/RNA hybrids, single-stranded DNA regions of R-loop structures, and single-stranded RNA molecules. Has 3'-5' exoribonuclease activity on mismatched deoxyribonucleotides at the 3' termini of nicked or gapped DNA molecules during short-patch BER. Possesses DNA 3' phosphodiesterase activity capable of removing lesions (such as phosphoglycolate) blocking the 3' side of DNA strand breaks. May also play a role in the epigenetic regulation of gene expression by participating in DNA demethylation. Acts as a loading factor for POLB onto non-incised AP sites in DNA and stimulates the 5'-terminal deoxyribose 5'-phosphate (dRp) excision activity of POLB. Plays a role in the protection from granzyme-mediated cellular repair leading to cell death. Also involved in the DNA cleavage step of class switch recombination (CSR). On the other hand, APEX1 also exerts reversible nuclear redox activity to regulate DNA binding affinity and transcriptional activity of transcriptional factors by controlling the redox status of their DNA-binding domain, such as the FOS/JUN AP-1 complex after exposure to IR. Involved in calcium-dependent down-regulation of parathyroid hormone (PTH) expression by binding to negative calcium response elements (nCaREs). Together with HNRNPL or the dimer XRCC5/XRCC6, associates with nCaRE, acting as an activator of transcriptional repression. Stimulates the YBX1-mediated MDR1 promoter activity, when acetylated at Lys-6 and Lys-7, leading to drug resistance. Also acts as an endoribonuclease involved in the control of single-stranded RNA metabolism. Plays a role in regulating MYC mRNA turnover by preferentially cleaving in between UA and CA dinucleotides of the MYC coding region determinant (CRD). In association with NMD1, plays a role in the rRNA quality control process during cell cycle progression. Associates, together with YBX1, on the MDR1 promoter. Together with NPM1, associates with rRNA. Binds DNA and RNA. The chain is DNA repair nuclease/redox regulator APEX1 (APEX1) from Bos taurus (Bovine).